The following is a 406-amino-acid chain: Multidrug resistance protein MdtG (406 aa).

11 helical membrane passes run 16–36 (VAWLGCFLTGAAFSLVMPFLP), 56–76 (LVFSITFLFSAIASPFWGGLA), 90–110 (LGMAIVMLLMGLAQNIWQFLL), 113–133 (ALLGLLGGFVPNANALIATQV), 144–164 (TLSTGGVSGALLGPLAGGLLA), 171–191 (PVFFITASVLLVCFLLTLFFT), 222–242 (LFVTTLIIQVATGSIAPILTL), 254–274 (IAFISGMIASVPGVAALLSAP), 288–308 (ILITALIISVLLLIPMSFVQT), 317–337 (FLLGAADGALLPAVQTLLVYN), and 376–396 (AVFCVTAGVVLFNAIYSWNSL).

This sequence belongs to the major facilitator superfamily. DHA1 family. MdtG (TC 2.A.1.2.20) subfamily.

The protein localises to the cell inner membrane. The polypeptide is Multidrug resistance protein MdtG (Citrobacter koseri (strain ATCC BAA-895 / CDC 4225-83 / SGSC4696)).